Consider the following 242-residue polypeptide: uncharacterized protein (242 aa).

The 114-residue stretch at 3–116 (TALVIDDEPF…RLRKTVKRLS (114 aa)) folds into the Response regulatory domain. At aspartate 54 the chain carries 4-aspartylphosphate. Positions 139-240 (IPCIGHNRIV…LKLLKEMLGL (102 aa)) constitute an HTH LytTR-type domain.

This is an uncharacterized protein from Vibrio vulnificus (strain CMCP6).